The following is a 346-amino-acid chain: High mobility group protein 20A (346 aa).

Composition is skewed to polar residues over residues 1–10 and 55–65; these read MESLMASSTL and SQGQLLQSEAS. Disordered stretches follow at residues 1 to 112 and 178 to 210; these read MESL…YVRF and FSRKTQDRQKGKSHRQDAARQATHDHEKETEVK. Residues 71-81 show a composition bias toward basic and acidic residues; the sequence is NEQRPEDEQRS. The segment covering 82–95 has biased composition (basic residues); the sequence is KRGGWSKGRKRKKP. Positions 102-170 form a DNA-binding region, HMG box; that stretch reads PKSPLTGYVR…RYMKELEQYQ (69 aa). Position 104 is a phosphoserine (S104). The span at 181–210 shows a compositional bias: basic and acidic residues; it reads KTQDRQKGKSHRQDAARQATHDHEKETEVK. Positions 228–272 form a coiled coil; that stretch reads SKAREAELRQLRKSNMEFEERNAALQKHVESMRTAVEKLEVDVIQ.

As to quaternary structure, interacts with DTNB. In terms of tissue distribution, expressed in brain. Detected in mature neurons.

Its subcellular location is the nucleus. In terms of biological role, plays a role in neuronal differentiation as chromatin-associated protein. Acts as inhibitor of HMG20B. Overcomes the repressive effects of the neuronal silencer REST and induces the activation of neuronal-specific genes. Involved in the recruitment of the histone methyltransferase KMT2A/MLL1 and consequent increased methylation of histone H3 lysine 4. This Mus musculus (Mouse) protein is High mobility group protein 20A (Hmg20a).